The following is a 727-amino-acid chain: Testis anion transporter 1 (727 aa).

Residues 1 to 23 lie on the Cytoplasmic side of the membrane; that stretch reads MLTIFPFLEWMCMYRLKDWLLGD. The chain crosses the membrane as a helical span at residues 24–44; that stretch reads LLAGISVGLVQVPQGLTLSLL. Over 45–47 the chain is Extracellular; the sequence is ARQ. Residues 48–68 traverse the membrane as a helical segment; it reads LIPPLNIAYAAFCSSVIYVIF. Topologically, residues 69–74 are cytoplasmic; the sequence is GSCHQM. The helical transmembrane segment at 75–95 threads the bilayer; that stretch reads SIGSFFLVSALLINVLKISPL. Residues 96-130 are Extracellular-facing; that stretch reads NNGHLVMGSFLKDEFSAPSYLMGYNKSLSVVATTT. N-linked (GlcNAc...) asparagine glycosylation is present at N120. A helical membrane pass occupies residues 131–151; the sequence is FLTGIIQLIMGVLGLGFIATY. Over 152-160 the chain is Cytoplasmic; the sequence is LPESAMSAY. Residues 161 to 181 form a helical membrane-spanning segment; it reads LAAVALHIMLSQLTCIFGIMI. The Extracellular portion of the chain corresponds to 182–198; the sequence is SFHAGPISFFYDIINYC. The chain crosses the membrane as a helical span at residues 199-219; the sequence is VALPKANSTSILLFLTVVVAL. Over 220 to 235 the chain is Cytoplasmic; the sequence is RINKCIRISFNQYPIE. A helical membrane pass occupies residues 236-256; it reads FPMELFLIIGFTVIGNKITMA. Over 257-283 the chain is Extracellular; that stretch reads TETSQTLIDMIPYSFLFPVTPDFSVLP. Residues 284–304 traverse the membrane as a helical segment; it reads KIILQAISLSLVSSFLLVFLG. Topologically, residues 305–360 are cytoplasmic; the sequence is KKIASLHNYSVNSNQDLIAIGLCNVVSSFFRSCVFTGAVARTIIQDKSGGRQQFAS. Residues 361–381 form a helical membrane-spanning segment; that stretch reads LVGAGVMLLLMVKMGHFFYAL. Over 382-383 the chain is Extracellular; the sequence is PN. A helical transmembrane segment spans residues 384 to 404; it reads AVLAGIILSNVVPYLETISNL. At 405–424 the chain is on the cytoplasmic side; sequence PSLWRQDQYDCALWMMTFSS. A helical transmembrane segment spans residues 425–445; the sequence is SIFLGLDIGLIISVVSAFFIT. Over 446 to 727 the chain is Extracellular; that stretch reads SVRSHRAKIL…LPSFHLQHIF (282 aa). Residues 471–722 form the STAS domain; sequence DYREIITIPG…NSLSRLPSFH (252 aa). Positions 592–727 are interaction with RACGAP1; sequence TVSSMSQKNQ…LPSFHLQHIF (136 aa).

This sequence belongs to the SLC26A/SulP transporter (TC 2.A.53) family. As to quaternary structure, interacts with RACGAP1. Interacts with CFTR; stimulates anion transport activity of CFTR. Post-translationally, N-glycosylated.

It is found in the membrane. The catalysed reaction is sulfate(out) + chloride(in) = sulfate(in) + chloride(out). It carries out the reaction oxalate(in) + chloride(out) = oxalate(out) + chloride(in). In terms of biological role, antiporter that mediates the exchange of sulfate and oxalate against chloride ions across a membrane. Stimulates anion transport activity of CFTR. May cooperate with CFTR in the regulation of chloride and bicarbonate ions fluxes required for activation of the ADCY10/PKA pathway during sperm motility and sperm capacitation. May play a role in sperm tail differentiation and motility and hence male fertility. In Macaca fascicularis (Crab-eating macaque), this protein is Testis anion transporter 1.